Consider the following 444-residue polypeptide: 23S rRNA (uracil(1939)-C(5))-methyltransferase RlmD (444 aa).

The TRAM domain maps to 5–67; it reads RNRLDRTPFQ…RHFDEAKTVG (63 aa). [4Fe-4S] cluster is bound by residues C80, C86, C89, and C168. The S-adenosyl-L-methionine site is built by Q276, F305, N310, E326, D353, and D374. C400 (nucleophile) is an active-site residue.

This sequence belongs to the class I-like SAM-binding methyltransferase superfamily. RNA M5U methyltransferase family. RlmD subfamily.

It catalyses the reaction uridine(1939) in 23S rRNA + S-adenosyl-L-methionine = 5-methyluridine(1939) in 23S rRNA + S-adenosyl-L-homocysteine + H(+). Its function is as follows. Catalyzes the formation of 5-methyl-uridine at position 1939 (m5U1939) in 23S rRNA. The chain is 23S rRNA (uracil(1939)-C(5))-methyltransferase RlmD from Xanthomonas axonopodis pv. citri (strain 306).